Consider the following 590-residue polypeptide: Aspartate--tRNA ligase (590 aa).

Glutamate 172 contacts L-aspartate. The aspartate stretch occupies residues 196-199 (QLFK). Arginine 218 lines the L-aspartate pocket. ATP contacts are provided by residues 218 to 220 (RDE) and glutamine 227. An L-aspartate-binding site is contributed by histidine 449. Glutamate 483 is a binding site for ATP. Arginine 490 is a binding site for L-aspartate. 535–538 (GLDR) contributes to the ATP binding site.

Belongs to the class-II aminoacyl-tRNA synthetase family. Type 1 subfamily. As to quaternary structure, homodimer.

Its subcellular location is the cytoplasm. It carries out the reaction tRNA(Asp) + L-aspartate + ATP = L-aspartyl-tRNA(Asp) + AMP + diphosphate. Functionally, catalyzes the attachment of L-aspartate to tRNA(Asp) in a two-step reaction: L-aspartate is first activated by ATP to form Asp-AMP and then transferred to the acceptor end of tRNA(Asp). The protein is Aspartate--tRNA ligase of Mannheimia succiniciproducens (strain KCTC 0769BP / MBEL55E).